The sequence spans 195 residues: Imidazoleglycerol-phosphate dehydratase (195 aa).

This sequence belongs to the imidazoleglycerol-phosphate dehydratase family.

The protein resides in the cytoplasm. It carries out the reaction D-erythro-1-(imidazol-4-yl)glycerol 3-phosphate = 3-(imidazol-4-yl)-2-oxopropyl phosphate + H2O. The protein operates within amino-acid biosynthesis; L-histidine biosynthesis; L-histidine from 5-phospho-alpha-D-ribose 1-diphosphate: step 6/9. In Burkholderia lata (strain ATCC 17760 / DSM 23089 / LMG 22485 / NCIMB 9086 / R18194 / 383), this protein is Imidazoleglycerol-phosphate dehydratase.